A 401-amino-acid polypeptide reads, in one-letter code: Probable 2,3-bisphosphoglycerate-independent phosphoglycerate mutase (401 aa).

It belongs to the BPG-independent phosphoglycerate mutase family. A-PGAM subfamily.

The catalysed reaction is (2R)-2-phosphoglycerate = (2R)-3-phosphoglycerate. It functions in the pathway carbohydrate degradation; glycolysis; pyruvate from D-glyceraldehyde 3-phosphate: step 3/5. Catalyzes the interconversion of 2-phosphoglycerate and 3-phosphoglycerate. This Thermotoga maritima (strain ATCC 43589 / DSM 3109 / JCM 10099 / NBRC 100826 / MSB8) protein is Probable 2,3-bisphosphoglycerate-independent phosphoglycerate mutase.